The primary structure comprises 595 residues: Adenine deaminase 2 (595 aa).

This sequence belongs to the metallo-dependent hydrolases superfamily. Adenine deaminase family. Requires Mn(2+) as cofactor.

It carries out the reaction adenine + H2O + H(+) = hypoxanthine + NH4(+). This chain is Adenine deaminase 2, found in Rhizobium etli (strain ATCC 51251 / DSM 11541 / JCM 21823 / NBRC 15573 / CFN 42).